An 80-amino-acid polypeptide reads, in one-letter code: Large ribosomal subunit protein uL24 (80 aa).

Belongs to the universal ribosomal protein uL24 family. As to quaternary structure, part of the 50S ribosomal subunit.

In terms of biological role, one of two assembly initiator proteins, it binds directly to the 5'-end of the 23S rRNA, where it nucleates assembly of the 50S subunit. One of the proteins that surrounds the polypeptide exit tunnel on the outside of the subunit. In Chlorobium phaeovibrioides (strain DSM 265 / 1930) (Prosthecochloris vibrioformis (strain DSM 265)), this protein is Large ribosomal subunit protein uL24.